Here is a 178-residue protein sequence, read N- to C-terminus: MTKKEQALIEQYAKSLVEVASEHHSLDALQADVLAILETFVTTNLDQSLSSLAVPHAEKIKLLTLLKGNNSVYMNNFLNLILQNEREAYLYQMLQAVLNEIAIVSNQYDVTVTSSLPLTEEQKSRVRAVVAKKFAVTAGRLIEKVDPSLIGGFIISVNNKVIDTSIRRQLQAFKMNLK.

It belongs to the ATPase delta chain family. As to quaternary structure, F-type ATPases have 2 components, F(1) - the catalytic core - and F(0) - the membrane proton channel. F(1) has five subunits: alpha(3), beta(3), gamma(1), delta(1), epsilon(1). F(0) has three main subunits: a(1), b(2) and c(10-14). The alpha and beta chains form an alternating ring which encloses part of the gamma chain. F(1) is attached to F(0) by a central stalk formed by the gamma and epsilon chains, while a peripheral stalk is formed by the delta and b chains.

Its subcellular location is the cell membrane. Functionally, f(1)F(0) ATP synthase produces ATP from ADP in the presence of a proton or sodium gradient. F-type ATPases consist of two structural domains, F(1) containing the extramembraneous catalytic core and F(0) containing the membrane proton channel, linked together by a central stalk and a peripheral stalk. During catalysis, ATP synthesis in the catalytic domain of F(1) is coupled via a rotary mechanism of the central stalk subunits to proton translocation. In terms of biological role, this protein is part of the stalk that links CF(0) to CF(1). It either transmits conformational changes from CF(0) to CF(1) or is implicated in proton conduction. This chain is ATP synthase subunit delta, found in Streptococcus pyogenes serotype M49 (strain NZ131).